Consider the following 165-residue polypeptide: Transcription antitermination protein NusB (165 aa).

A disordered region spans residues 139–165 (EAVRSHRRNKRPAADKPVATDKPAAAE).

Belongs to the NusB family.

Involved in transcription antitermination. Required for transcription of ribosomal RNA (rRNA) genes. Binds specifically to the boxA antiterminator sequence of the ribosomal RNA (rrn) operons. The chain is Transcription antitermination protein NusB from Laribacter hongkongensis (strain HLHK9).